A 175-amino-acid polypeptide reads, in one-letter code: Two-on-two hemoglobin-3 (175 aa).

The heme site is built by Y85 and H98. Residues 153–175 (QNEKPKHKPQCACKHAANKPAEE) are disordered.

It belongs to the truncated hemoglobin family. Group II subfamily. Homodimer when ferric. Interacts with RGLG3 and RGLG4. The cofactor is heme. Expressed ubiquitously, with higher levels in root tissue than in shoot tissue.

Its function is as follows. Hemoglobin-like protein that exhibits an unusual concentration-independent binding of O(2) and CO. May promote shoot organogenesis from root explants in vitro. Inhibits RGLG3 and RGLG4 ubiquitination activity. In Arabidopsis thaliana (Mouse-ear cress), this protein is Two-on-two hemoglobin-3 (GLB3).